The chain runs to 393 residues: Probable alpha-1,6-mannosyltransferase MNN10 (393 aa).

The Cytoplasmic portion of the chain corresponds to 1–52; it reads MSSVPYNSQLPISNHLEYDEDEKKSRGSKLGLKYKMIYWRKTLCSSLARWRK. Residues 53–73 traverse the membrane as a helical; Signal-anchor for type II membrane protein segment; that stretch reads LILLISLALFLFIWISDSTIS. At 74 to 393 the chain is on the lumenal side; it reads RNPSTTSFQG…RKWYTRFFFP (320 aa). Residues 77-97 form a disordered region; sequence STTSFQGQNSNDNKLSNTGSS.

This sequence belongs to the glycosyltransferase 34 family. As to quaternary structure, component of the M-Pol II complex composed of ANP1, MNN9, MNN10, MNN11 and HOC1.

The protein localises to the endoplasmic reticulum membrane. The protein resides in the golgi apparatus. It localises to the cis-Golgi network membrane. Functionally, required for polarized growth and efficient budding. Its function is as follows. The M-Pol II complex possesses alpha-1,6-mannosyltransferase activity and is probably involved in the elongation of the mannan backbone of N-linked glycans on cell wall and periplasmic proteins. This chain is Probable alpha-1,6-mannosyltransferase MNN10 (MNN10), found in Saccharomyces cerevisiae (strain ATCC 204508 / S288c) (Baker's yeast).